A 676-amino-acid polypeptide reads, in one-letter code: MACSTLSKSPKDKIDPRDLLIPLILFLSLKGARSAAPGSSPHQVYNITWEVTNGDRETVWAISGNHPLWTWWPDLTPDLCMLALSGPPHWGLEYRAPYSSPPGPPCCSGSSGNRAGCARDCDEPLTSLTPRCNTAWNRLKLDQVTHKSSGGFYVCPGSHRPRKAKSCGGPDSFYCASWGCETTGRAYWKPSSSWDYITVDNNLTTNQAAQVCKDNKWCNPLAIQFTNAGKQVTSWTIGHYWGLRLYVSGQDPGLTFGIRLKYQNLGPRVPIGPNPVLADQLSFPLPNPLPKPAKSPSASNSTPTLISPSPAPTQPPPAGTGDRLLNLVQGAYQALNLTNPDKTQECWLCLVSAPPYYEGVAVLGTYSNHTSAPANCSAGSQHKLTLSEVTGQGLCIGTVPKTHQALCNTTLKTGKGSYYLVAPAGTMWACNTGLTPCLSATVLNRTTDYCVLVELWPRVTYHPPSYVYSQFEKSYRHKREPVSLTLALLLGGLTMGGIAAGVGTGTTALVATQQFQQLHAAVQDDLKEVEKSITNLEKSLTSLSEVVLQNRRGLDLLFLKEGGLCAALKEECCFYADHTGLVRDSMAKLRERLTQRQKLFESSQGWFEGLFNRSPWFTTLISTIMGPLIILLLILLFGPCILNRLVQFVKDRISVVQALVLTQQYHQLKPLEYEPQ.

The signal sequence occupies residues 1-34 (MACSTLSKSPKDKIDPRDLLIPLILFLSLKGARS). Positions 35 to 270 (AAPGSSPHQV…KYQNLGPRVP (236 aa)) are receptor-binding domain (RBD). Over 35-620 (AAPGSSPHQV…FNRSPWFTTL (586 aa)) the chain is Extracellular. Residue N46 is glycosylated (N-linked (GlcNAc...) asparagine; by host). 5 disulfide bridges follow: C80/C132, C106/C121, C107/C117, C155/C175, and C167/C180. Residue H89 participates in Zn(2+) binding. A Zn(2+)-binding site is contributed by D120. N202 carries N-linked (GlcNAc...) asparagine; by host glycosylation. A disulfide bridge connects residues C212 and C218. Residues 287–322 (NPLPKPAKSPSASNSTPTLISPSPAPTQPPPAGTGD) are disordered. The span at 294–308 (KSPSASNSTPTLISP) shows a compositional bias: low complexity. Over residues 309–318 (SPAPTQPPPA) the composition is skewed to pro residues. N336 carries N-linked (GlcNAc...) asparagine; by host glycosylation. Intrachain disulfides connect C346-C349, C346-C573, C376-C430, C395-C407, C437-C450, and C565-C572. The short motif at 346–349 (CWLC) is the CXXC element. N-linked (GlcNAc...) asparagine; by host glycans are attached at residues N368 and N375. N-linked (GlcNAc...) asparagine; by host glycosylation is found at N408 and N444. Residues 482 to 502 (VSLTLALLLGGLTMGGIAAGV) form a fusion peptide region. Positions 513–547 (QQFQQLHAAVQDDLKEVEKSITNLEKSLTSLSEVV) form a coiled coil. An immunosuppression region spans residues 548–564 (LQNRRGLDLLFLKEGGL). The CX6CC signature appears at 565–573 (CAALKEECC). A helical transmembrane segment spans residues 621-641 (ISTIMGPLIILLLILLFGPCI). C640 is lipidated: S-palmitoyl cysteine; by host. The Cytoplasmic portion of the chain corresponds to 642–676 (LNRLVQFVKDRISVVQALVLTQQYHQLKPLEYEPQ). A YXXL motif; contains endocytosis signal motif is present at residues 665–668 (YHQL).

The mature envelope protein (Env) consists of a trimer of SU-TM heterodimers attached by a labile interchain disulfide bond. In terms of processing, specific enzymatic cleavages in vivo yield mature proteins. Envelope glycoproteins are synthesized as an inactive precursor that is N-glycosylated and processed likely by host cell furin or by a furin-like protease in the Golgi to yield the mature SU and TM proteins. The cleavage site between SU and TM requires the minimal sequence [KR]-X-[KR]-R. The R-peptide is released from the C-terminus of the cytoplasmic tail of the TM protein upon particle formation as a result of proteolytic cleavage by the viral protease. Cleavage of this peptide is required for TM to become fusogenic. Post-translationally, the CXXC motif is highly conserved across a broad range of retroviral envelope proteins. It is thought to participate in the formation of a labile disulfide bond possibly with the CX6CC motif present in the transmembrane protein. Isomerization of the intersubunit disulfide bond to an SU intrachain disulfide bond is thought to occur upon receptor recognition in order to allow membrane fusion. The transmembrane protein is palmitoylated. In terms of processing, the R-peptide is palmitoylated.

The protein localises to the virion membrane. Its subcellular location is the host cell membrane. Functionally, the surface protein (SU) attaches the virus to the host cell by binding to its receptor. This interaction triggers the refolding of the transmembrane protein (TM) and is thought to activate its fusogenic potential by unmasking its fusion peptide. Fusion occurs at the host cell plasma membrane. Its function is as follows. The transmembrane protein (TM) acts as a class I viral fusion protein. Under the current model, the protein has at least 3 conformational states: pre-fusion native state, pre-hairpin intermediate state, and post-fusion hairpin state. During viral and target cell membrane fusion, the coiled coil regions (heptad repeats) assume a trimer-of-hairpins structure, positioning the fusion peptide in close proximity to the C-terminal region of the ectodomain. The formation of this structure appears to drive apposition and subsequent fusion of viral and target cell membranes. Membranes fusion leads to delivery of the nucleocapsid into the cytoplasm. In Mus musculus (Mouse), this protein is Envelope glycoprotein (env).